The following is a 347-amino-acid chain: Ribosomal RNA large subunit methyltransferase M (347 aa).

Residues S184, 217-220 (APGG), D236, D256, and D272 contribute to the S-adenosyl-L-methionine site. The Proton acceptor role is filled by K301.

Belongs to the class I-like SAM-binding methyltransferase superfamily. RNA methyltransferase RlmE family. RlmM subfamily. Monomer.

The protein resides in the cytoplasm. The catalysed reaction is cytidine(2498) in 23S rRNA + S-adenosyl-L-methionine = 2'-O-methylcytidine(2498) in 23S rRNA + S-adenosyl-L-homocysteine + H(+). Functionally, catalyzes the 2'-O-methylation at nucleotide C2498 in 23S rRNA. The sequence is that of Ribosomal RNA large subunit methyltransferase M from Xanthomonas oryzae pv. oryzae (strain MAFF 311018).